Consider the following 40-residue polypeptide: Photosystem II reaction center protein J (40 aa).

The chain crosses the membrane as a helical span at residues 8–28; the sequence is IPLWLIGTVTGILVIGLLGIF.

Belongs to the PsbJ family. As to quaternary structure, PSII is composed of 1 copy each of membrane proteins PsbA, PsbB, PsbC, PsbD, PsbE, PsbF, PsbH, PsbI, PsbJ, PsbK, PsbL, PsbM, PsbT, PsbX, PsbY, PsbZ, Psb30/Ycf12, at least 3 peripheral proteins of the oxygen-evolving complex and a large number of cofactors. It forms dimeric complexes.

It is found in the plastid. The protein localises to the chloroplast thylakoid membrane. Its function is as follows. One of the components of the core complex of photosystem II (PSII). PSII is a light-driven water:plastoquinone oxidoreductase that uses light energy to abstract electrons from H(2)O, generating O(2) and a proton gradient subsequently used for ATP formation. It consists of a core antenna complex that captures photons, and an electron transfer chain that converts photonic excitation into a charge separation. In Angiopteris evecta (Mule's foot fern), this protein is Photosystem II reaction center protein J.